The sequence spans 318 residues: MSSSASLSSSASLQRVVVLVGPTATGKSVLAVRLAQRFNAEVVNADSMQVYRGMDIGTAKLPPAERDGVAHHVLDVWPVTKTASVAEYQHLARAAIEEIGRRGRLPILVGGSGLYVRAAVDRLEFPGTDPAIRARLEAELAAHGPEALHARLARLDPQAAERILPTNGRRIVRALEVLQLGRPRFAAELPEYASVYDALFLGLDLATPELDDRVERRVAAMWQAGFVDEVRHLAEDCGLREGRTASRALGYRQVLTMLDGGCDEAEARRRTVDATKRFVRRQRSWFRPDPRIHWLDAADAALETAAARTIEGWMTSRS.

Residue glycine 21–serine 28 coordinates ATP. Threonine 23–serine 28 lines the substrate pocket. The interaction with substrate tRNA stretch occupies residues aspartate 46–glutamine 49.

It belongs to the IPP transferase family. In terms of assembly, monomer. It depends on Mg(2+) as a cofactor.

The enzyme catalyses adenosine(37) in tRNA + dimethylallyl diphosphate = N(6)-dimethylallyladenosine(37) in tRNA + diphosphate. Its function is as follows. Catalyzes the transfer of a dimethylallyl group onto the adenine at position 37 in tRNAs that read codons beginning with uridine, leading to the formation of N6-(dimethylallyl)adenosine (i(6)A). In Acidothermus cellulolyticus (strain ATCC 43068 / DSM 8971 / 11B), this protein is tRNA dimethylallyltransferase.